We begin with the raw amino-acid sequence, 691 residues long: Putative calcium up-regulated protein I (691 aa).

A Ricin B-type lectin domain is found at 47-174 (SNCYLKEKPQ…NYTSQIWTYN (128 aa)).

This sequence belongs to the cup family.

The chain is Putative calcium up-regulated protein I (cupI) from Dictyostelium discoideum (Social amoeba).